Here is a 382-residue protein sequence, read N- to C-terminus: uncharacterized protein (382 aa).

12 consecutive transmembrane segments (helical) span residues 14 to 34 (GLLL…LWLA), 45 to 65 (MVSS…GYLI), 75 to 95 (YLAS…VGFW), 102 to 122 (FIAG…LMCS), 131 to 151 (LLAA…LLVS), 157 to 177 (LLHV…PLLF), 204 to 224 (LGVN…GLMP), 231 to 251 (GMAN…GILG), 270 to 290 (VQVF…AMAP), 291 to 311 (ALFI…AWAC), 325 to 345 (ALLL…AMLM), and 349 to 369 (SDNL…LMLL).

It belongs to the major facilitator superfamily. YcaD (TC 2.A.1.26) family.

The protein resides in the cell inner membrane. This is an uncharacterized protein from Salmonella paratyphi A (strain ATCC 9150 / SARB42).